The sequence spans 125 residues: Large ribosomal subunit protein bL12 (125 aa).

Belongs to the bacterial ribosomal protein bL12 family. Homodimer. Part of the ribosomal stalk of the 50S ribosomal subunit. Forms a multimeric L10(L12)X complex, where L10 forms an elongated spine to which 2 to 4 L12 dimers bind in a sequential fashion. Binds GTP-bound translation factors.

Its function is as follows. Forms part of the ribosomal stalk which helps the ribosome interact with GTP-bound translation factors. Is thus essential for accurate translation. This is Large ribosomal subunit protein bL12 from Erythrobacter litoralis (strain HTCC2594).